The primary structure comprises 404 residues: Cysteine desulfurase IscS (404 aa).

Pyridoxal 5'-phosphate is bound by residues 75 to 76 (AT), asparagine 155, glutamine 183, and 203 to 205 (SGH). At lysine 206 the chain carries N6-(pyridoxal phosphate)lysine. Threonine 243 is a binding site for pyridoxal 5'-phosphate. Residue cysteine 328 is the Cysteine persulfide intermediate of the active site. [2Fe-2S] cluster is bound at residue cysteine 328.

The protein belongs to the class-V pyridoxal-phosphate-dependent aminotransferase family. NifS/IscS subfamily. As to quaternary structure, homodimer. Forms a heterotetramer with IscU, interacts with other sulfur acceptors. It depends on pyridoxal 5'-phosphate as a cofactor.

The protein localises to the cytoplasm. The enzyme catalyses (sulfur carrier)-H + L-cysteine = (sulfur carrier)-SH + L-alanine. It participates in cofactor biosynthesis; iron-sulfur cluster biosynthesis. Functionally, master enzyme that delivers sulfur to a number of partners involved in Fe-S cluster assembly, tRNA modification or cofactor biosynthesis. Catalyzes the removal of elemental sulfur and selenium atoms from cysteine and selenocysteine to produce alanine. Functions as a sulfur delivery protein for Fe-S cluster synthesis onto IscU, an Fe-S scaffold assembly protein, as well as other S acceptor proteins. Also functions as a selenium delivery protein in the pathway for the biosynthesis of selenophosphate. The polypeptide is Cysteine desulfurase IscS (Salmonella paratyphi C (strain RKS4594)).